The sequence spans 179 residues: Apoptosis regulator Bcl-2 homolog (179 aa).

The short motif at 76–95 (ELFKDLINWGRICGFIVFSA) is the BH1 element. A BH2 motif is present at residues 126-141 (PWMISHGGQEEFLAFS).

Belongs to the Bcl-2 family. In terms of assembly, interacts with host BECN1 (via BH3 homology domain); this interaction allows the virus to inhibit BECN1, and thus autophagy. Interacts with host BID. Interacts with host BAX.

It localises to the host mitochondrion. The protein resides in the host endoplasmic reticulum. Functionally, suppresses apoptosis in host cell to promote the viral replication. Has the ability to potentially bind to all the members of the proapoptotic Bcl-2 family. Inhibits autophagy by interacting with host Beclin 1 (BECN1). This chain is Apoptosis regulator Bcl-2 homolog, found in African swine fever virus (isolate Tick/South Africa/Pretoriuskop Pr4/1996) (ASFV).